The primary structure comprises 504 residues: Amyloid-beta A4 precursor protein-binding family B member 3 (504 aa).

In terms of domain architecture, WW spans 29–61 (TGLPPGWRKIRDAAGTYYWHVPSGSTQWQRPTW). 2 PID domains span residues 111-278 (EPGA…QVEL) and 283-438 (SQAA…RTSS).

Interacts with APP (via intracellular domain). Interacts with APLP1 and APLP2 (via intracellular domain). Expressed predominantly in brain and testis.

Its subcellular location is the cytoplasm. It localises to the nucleus. May modulate the internalization of amyloid-beta precursor protein. The protein is Amyloid-beta A4 precursor protein-binding family B member 3 of Rattus norvegicus (Rat).